Consider the following 96-residue polypeptide: Evasin P1100 (96 aa).

The signal sequence occupies residues 1–28; sequence MAFNVITFLQFSVFVVILFNINLHSASA. 3 disulfide bridges follow: cysteine 48–cysteine 67, cysteine 52–cysteine 69, and cysteine 63–cysteine 80. An N-linked (GlcNAc...) asparagine glycan is attached at asparagine 51. N-linked (GlcNAc...) asparagine glycosylation occurs at asparagine 74.

Its subcellular location is the secreted. Functionally, salivary chemokine-binding protein which binds to host chemokines CXCL1, CXCL2, CXCL3, CXCL5, CXCL6, CXCL10, CXCL11 and CXCL13. This is Evasin P1100 from Ixodes ricinus (Common tick).